Here is a 2542-residue protein sequence, read N- to C-terminus: Talin-2 (2542 aa).

The region spanning 88-406 is the FERM domain; the sequence is RPQKIRMLDG…GYIDIILKKK (319 aa). Positions 312–406 are interaction with PIP5K1C; it reads GVSFFLVKEK…GYIDIILKKK (95 aa). Residues serine 428, serine 449, serine 623, and serine 1023 each carry the phosphoserine modification. Residue tyrosine 1665 is modified to Phosphotyrosine. Position 1843 is a phosphothreonine (threonine 1843). The I/LWEQ domain maps to 2294–2533; the sequence is TEWVDPEDPT…QIRQQQYKFL (240 aa).

As to quaternary structure, interacts directly with PIP5K1C.

The protein resides in the cytoplasm. It is found in the cell junction. Its subcellular location is the focal adhesion. The protein localises to the synapse. It localises to the cell membrane. The protein resides in the cytoskeleton. In terms of biological role, as a major component of focal adhesion plaques that links integrin to the actin cytoskeleton, may play an important role in cell adhesion. Recruits PIP5K1C to focal adhesion plaques and strongly activates its kinase activity. The chain is Talin-2 (TLN2) from Homo sapiens (Human).